Consider the following 177-residue polypeptide: Large ribosomal subunit protein uL6 (177 aa).

It belongs to the universal ribosomal protein uL6 family. In terms of assembly, part of the 50S ribosomal subunit.

Its function is as follows. This protein binds to the 23S rRNA, and is important in its secondary structure. It is located near the subunit interface in the base of the L7/L12 stalk, and near the tRNA binding site of the peptidyltransferase center. This Methylobacterium nodulans (strain LMG 21967 / CNCM I-2342 / ORS 2060) protein is Large ribosomal subunit protein uL6.